The primary structure comprises 602 residues: Aspartate--tRNA(Asp/Asn) ligase (602 aa).

L-aspartate is bound at residue Glu-176. Residues 200–203 (QQFK) are aspartate. Residues Arg-222 and His-452 each coordinate L-aspartate. 222–224 (RDE) lines the ATP pocket. Glu-490 provides a ligand contact to ATP. Residue Arg-497 coordinates L-aspartate. 542–545 (GIDR) lines the ATP pocket.

It belongs to the class-II aminoacyl-tRNA synthetase family. Type 1 subfamily. Homodimer.

The protein localises to the cytoplasm. It catalyses the reaction tRNA(Asx) + L-aspartate + ATP = L-aspartyl-tRNA(Asx) + AMP + diphosphate. Aspartyl-tRNA synthetase with relaxed tRNA specificity since it is able to aspartylate not only its cognate tRNA(Asp) but also tRNA(Asn). Reaction proceeds in two steps: L-aspartate is first activated by ATP to form Asp-AMP and then transferred to the acceptor end of tRNA(Asp/Asn). The polypeptide is Aspartate--tRNA(Asp/Asn) ligase (Rickettsia conorii (strain ATCC VR-613 / Malish 7)).